The sequence spans 561 residues: Glucose-6-phosphate isomerase (561 aa).

Glu-366 serves as the catalytic Proton donor. Catalysis depends on residues His-397 and Lys-525.

It belongs to the GPI family.

It localises to the cytoplasm. It carries out the reaction alpha-D-glucose 6-phosphate = beta-D-fructose 6-phosphate. It functions in the pathway carbohydrate degradation; glycolysis; D-glyceraldehyde 3-phosphate and glycerone phosphate from D-glucose: step 2/4. This Dictyostelium discoideum (Social amoeba) protein is Glucose-6-phosphate isomerase (gpi).